A 213-amino-acid polypeptide reads, in one-letter code: Protein Pars_0011 (213 aa).

One can recognise an AMMECR1 domain in the interval 8–201; that stretch reads EEGRYLVKLA…EREPNEEVYQ (194 aa).

The chain is Protein Pars_0011 from Pyrobaculum arsenaticum (strain DSM 13514 / JCM 11321 / PZ6).